A 654-amino-acid polypeptide reads, in one-letter code: Acetyl-coenzyme A synthetase (654 aa).

CoA contacts are provided by residues 196 to 199 and threonine 316; that span reads RGGK. Residues 392 to 394, 416 to 421, aspartate 506, and arginine 521 each bind ATP; these read GEP and DTWWQT. Serine 529 contacts CoA. An ATP-binding site is contributed by arginine 532. Positions 543 and 548 each coordinate Mg(2+). Lysine 618 is subject to N6-acetyllysine.

It belongs to the ATP-dependent AMP-binding enzyme family. Requires Mg(2+) as cofactor. Acetylated. Deacetylation by the SIR2-homolog deacetylase activates the enzyme.

The enzyme catalyses acetate + ATP + CoA = acetyl-CoA + AMP + diphosphate. In terms of biological role, catalyzes the conversion of acetate into acetyl-CoA (AcCoA), an essential intermediate at the junction of anabolic and catabolic pathways. AcsA undergoes a two-step reaction. In the first half reaction, AcsA combines acetate with ATP to form acetyl-adenylate (AcAMP) intermediate. In the second half reaction, it can then transfer the acetyl group from AcAMP to the sulfhydryl group of CoA, forming the product AcCoA. The sequence is that of Acetyl-coenzyme A synthetase from Methylobacillus flagellatus (strain ATCC 51484 / DSM 6875 / VKM B-1610 / KT).